The following is a 408-amino-acid chain: Transmembrane protein 237 (408 aa).

The span at 1–14 (MRTDSGARLEEGHL) shows a compositional bias: basic and acidic residues. Residues 1–137 (MRTDSGARLE…RRKTKKTQPA (137 aa)) form a disordered region. Ser25 and Ser49 each carry phosphoserine. Basic and acidic residues predominate over residues 60–77 (RPSEGNEPSTKELKEHPE). A compositionally biased stretch (low complexity) spans 95–106 (TSSTQKKSSSSS). The next 4 membrane-spanning stretches (helical) occupy residues 227-247 (MIGLFSHGFLAGCAVWNIVVI), 268-288 (LAYPFQSLLYLLLALSTISAF), 303-323 (FLALDPTALASFLYFTALILS), and 358-378 (WIVVNLVVALLVGLSWLFLSY).

This sequence belongs to the TMEM237 family. Part of the tectonic-like complex (also named B9 complex). Interacts with TMEM107.

It localises to the membrane. The protein resides in the cell projection. The protein localises to the cilium. Its function is as follows. Component of the transition zone in primary cilia. Required for ciliogenesis. The polypeptide is Transmembrane protein 237 (TMEM237) (Homo sapiens (Human)).